Consider the following 499-residue polypeptide: GTPase Der (499 aa).

2 EngA-type G domains span residues 3–166 (PVVA…MDEV) and 211–384 (IKLA…DCST). GTP contacts are provided by residues 9–16 (GRPNVGKS), 56–60 (DTGGI), 118–121 (NKTD), 217–224 (GRPNVGKS), 264–268 (DTAGV), and 329–332 (NKWD). The region spanning 385–469 (RRVNTSMLTR…PIRIQFKEGD (85 aa)) is the KH-like domain.

It belongs to the TRAFAC class TrmE-Era-EngA-EngB-Septin-like GTPase superfamily. EngA (Der) GTPase family. In terms of assembly, associates with the 50S ribosomal subunit.

Its function is as follows. GTPase that plays an essential role in the late steps of ribosome biogenesis. The sequence is that of GTPase Der from Erwinia tasmaniensis (strain DSM 17950 / CFBP 7177 / CIP 109463 / NCPPB 4357 / Et1/99).